The sequence spans 384 residues: BarH-like 2 homeobox protein (384 aa).

Disordered regions lie at residues 1-134 (MTAM…APRT), 154-235 (CAPY…ARTA), and 364-384 (PGGQPALNPLSNPIPGTPHPR). 2 stretches are compositionally biased toward low complexity: residues 101–110 (VPAQSLQPSP) and 119–134 (QSAAQQLGSAAAAPRT). Residues 157-175 (YSTSVSSPHHTPKQESNAA) show a composition bias toward polar residues. A compositionally biased stretch (basic and acidic residues) spans 177 to 217 (ESFRPKLEQEDGKTKLDKREDPQSDIKCHGTKEEGDREITS). Positions 229 to 288 (PRKARTAFSDHQLNQLERSFERQKYLSVQDRMDLAAALNLTDTQVKTWYQNRRTKWKRQT) form a DNA-binding region, homeobox.

It belongs to the BAR homeobox family.

The protein localises to the nucleus. Potential regulator of neural basic helix-loop-helix genes. It may down-regulate expression of ASCL1 and, within the thalamus, up-regulate NGN2, thereby regulating distinct patterns of neuronal differentiation. The chain is BarH-like 2 homeobox protein (Barhl2) from Mus musculus (Mouse).